We begin with the raw amino-acid sequence, 156 residues long: Ribosome maturation factor RimP (156 aa).

The protein belongs to the RimP family.

It localises to the cytoplasm. In terms of biological role, required for maturation of 30S ribosomal subunits. This Bacillus subtilis (strain 168) protein is Ribosome maturation factor RimP.